Reading from the N-terminus, the 143-residue chain is Ribosome maturation factor RimP (143 aa).

This sequence belongs to the RimP family.

The protein resides in the cytoplasm. In terms of biological role, required for maturation of 30S ribosomal subunits. In Borrelia recurrentis (strain A1), this protein is Ribosome maturation factor RimP.